Here is a 1132-residue protein sequence, read N- to C-terminus: Mediator of RNA polymerase II transcription subunit 5 (1132 aa).

Residues 998–1023 (KGDVDIKGEDLHEKNDSAEVRQETQP) show a composition bias toward basic and acidic residues. The interval 998 to 1070 (KGDVDIKGED…RTNNVPMIKA (73 aa)) is disordered. A compositionally biased stretch (acidic residues) spans 1047–1057 (YEEEEENEDND).

It belongs to the Mediator complex subunit 5 family. In terms of assembly, component of the Mediator complex, which is composed of at least 21 subunits that form three structurally distinct submodules. The Mediator head module contains MED6, MED8, MED11, SRB4/MED17, SRB5/MED18, ROX3/MED19, SRB2/MED20 and SRB6/MED22, the middle module contains MED1, MED4, NUT1/MED5, MED7, CSE2/MED9, NUT2/MED10, SRB7/MED21 and SOH1/MED31, and the tail module contains MED2, PGD1/MED3, RGR1/MED14, GAL11/MED15 and SIN4/MED16. The head and the middle modules interact directly with RNA polymerase II, whereas the elongated tail module interacts with gene-specific regulatory proteins.

Its subcellular location is the nucleus. Component of the Mediator complex, a coactivator involved in the regulated transcription of nearly all RNA polymerase II-dependent genes. Mediator functions as a bridge to convey information from gene-specific regulatory proteins to the basal RNA polymerase II transcription machinery. The Mediator complex, having a compact conformation in its free form, is recruited to promoters by direct interactions with regulatory proteins and serves for the assembly of a functional preinitiation complex with RNA polymerase II and the general transcription factors. The Mediator complex unfolds to an extended conformation and partially surrounds RNA polymerase II, specifically interacting with the unphosphorylated form of the C-terminal domain (CTD) of RNA polymerase II. The Mediator complex dissociates from the RNA polymerase II holoenzyme and stays at the promoter when transcriptional elongation begins. This is Mediator of RNA polymerase II transcription subunit 5 (NUT1) from Saccharomyces cerevisiae (strain ATCC 204508 / S288c) (Baker's yeast).